The sequence spans 291 residues: MHFQDVILTLQNFWAKRGCVIMQPIDVECGAGTFNPSTFLRVIGPEPWNVAYVEPSRRPTDGRYGENPNRLQHYFQFQVILKPSPDNVQDIYLDSLRALGIDPAAHDIRFVEDDWESPTLGAWGLGWEVWLNGMEVTQFTYFQQVGGIDLAPTSVEITYGLERLCMYLQGKESVYDLSWNDRVTYGNIYHQNEVEQSKYNFEASNPKMLLDQFNACEAECKRLCDEGLLWPAYDYCLKCSHTFNLLDARGAISITERTGYIGRVRALASAVARLYAVQREELGYPMLASAR.

This sequence belongs to the class-II aminoacyl-tRNA synthetase family. Tetramer of two alpha and two beta subunits.

The protein resides in the cytoplasm. It catalyses the reaction tRNA(Gly) + glycine + ATP = glycyl-tRNA(Gly) + AMP + diphosphate. The chain is Glycine--tRNA ligase alpha subunit from Nitratidesulfovibrio vulgaris (strain DSM 19637 / Miyazaki F) (Desulfovibrio vulgaris).